The sequence spans 594 residues: Zinc finger protein 37 (594 aa).

The tract at residues 1-253 is disordered; that stretch reads MATSEPAESD…KPEKAPGSGK (253 aa). The residue at position 3 (Thr-3) is a Phosphothreonine. A KRAB domain is found at 3–74; sequence TSEPAESDAV…GKKASPSSLK (72 aa). Ser-9 carries the post-translational modification Phosphoserine. Positions 10–33 are enriched in basic and acidic residues; it reads DAVRAKEWEQLEPVQRDVYKDTKL. The segment covering 34–46 has biased composition (polar residues); it reads ENCSNPASMGNQD. Positions 89 to 111 are enriched in basic and acidic residues; sequence QQDDEHREEKQKSQSKLTKEVTL. The span at 145–158 shows a compositional bias: polar residues; that stretch reads KSSSRGKNSNQNSD. Basic and acidic residues-rich tracts occupy residues 159-172 and 181-234; these read SLKK…DHRK and VNKD…TGEK. C2H2-type zinc fingers lie at residues 255–277, 283–305, 311–324, 339–361, 367–389, 395–417, 423–445, 451–473, 479–501, 507–529, 535–557, and 563–585; these read YECN…QRTH, YECE…GHKH, YKCN…LRSH, YECK…VRTH, YECN…MRIH, FECN…QRTH, YKCD…MRTH, FECN…QRVH, YECV…QRTH, FECY…QRSH, and YECI…MKIH.

The protein belongs to the krueppel C2H2-type zinc-finger protein family. As to expression, expressed in testis and brain.

The protein localises to the nucleus. In terms of biological role, may have a role in regulating spermiogenesis. This is Zinc finger protein 37 (Zfp37) from Mus musculus (Mouse).